Reading from the N-terminus, the 86-residue chain is Small ribosomal subunit protein bS16 (86 aa).

It belongs to the bacterial ribosomal protein bS16 family.

This is Small ribosomal subunit protein bS16 from Methylibium petroleiphilum (strain ATCC BAA-1232 / LMG 22953 / PM1).